The sequence spans 413 residues: Arginine biosynthesis bifunctional protein ArgJ (413 aa).

Substrate is bound by residues Thr160, Lys186, Thr197, Glu284, Asn408, and Ser413. Thr197 (nucleophile) is an active-site residue.

Belongs to the ArgJ family. As to quaternary structure, heterotetramer of two alpha and two beta chains.

It localises to the cytoplasm. It catalyses the reaction N(2)-acetyl-L-ornithine + L-glutamate = N-acetyl-L-glutamate + L-ornithine. The enzyme catalyses L-glutamate + acetyl-CoA = N-acetyl-L-glutamate + CoA + H(+). It participates in amino-acid biosynthesis; L-arginine biosynthesis; L-ornithine and N-acetyl-L-glutamate from L-glutamate and N(2)-acetyl-L-ornithine (cyclic): step 1/1. The protein operates within amino-acid biosynthesis; L-arginine biosynthesis; N(2)-acetyl-L-ornithine from L-glutamate: step 1/4. Functionally, catalyzes two activities which are involved in the cyclic version of arginine biosynthesis: the synthesis of N-acetylglutamate from glutamate and acetyl-CoA as the acetyl donor, and of ornithine by transacetylation between N(2)-acetylornithine and glutamate. This chain is Arginine biosynthesis bifunctional protein ArgJ, found in Burkholderia pseudomallei (strain K96243).